A 490-amino-acid polypeptide reads, in one-letter code: Sulfate adenylyltransferase (490 aa).

Positions 1–165 (MTKALLKDLN…LQAVTPIRHF (165 aa)) are N-terminal. Residues 166–390 (DFVEYRYSPA…LRQSYPPKYS (225 aa)) form a catalytic region. Sulfate is bound at residue glutamine 193. ATP-binding positions include 193–196 (QTRN) and 287–290 (GRDH). Catalysis depends on residues threonine 194, arginine 195, and asparagine 196. Sulfate is bound at residue arginine 195. Residue alanine 291 participates in sulfate binding. Methionine 329 lines the ATP pocket. Phosphothreonine is present on threonine 356. The tract at residues 391 to 490 (QGFVLAVPAT…LSQLSDEGYL (100 aa)) is required for oligomerization; adenylyl-sulfate kinase-like.

This sequence belongs to the sulfate adenylyltransferase family. Homohexamer. Dimer of trimers.

The protein localises to the cytoplasm. The catalysed reaction is sulfate + ATP + H(+) = adenosine 5'-phosphosulfate + diphosphate. The protein operates within sulfur metabolism; hydrogen sulfide biosynthesis; sulfite from sulfate: step 1/3. Catalyzes the first intracellular reaction of sulfate assimilation, forming adenosine-5'-phosphosulfate (APS) from inorganic sulfate and ATP. Plays an important role in sulfate activation as a component of the biosynthesis pathway of sulfur-containing amino acids. This is Sulfate adenylyltransferase (sua1) from Schizosaccharomyces pombe (strain 972 / ATCC 24843) (Fission yeast).